Consider the following 250-residue polypeptide: Ribosomal RNA small subunit methyltransferase J (250 aa).

Residues 101 to 102 (RD), 117 to 118 (ER), 153 to 154 (SS), and Asp-171 each bind S-adenosyl-L-methionine.

It belongs to the methyltransferase superfamily. RsmJ family.

Its subcellular location is the cytoplasm. It carries out the reaction guanosine(1516) in 16S rRNA + S-adenosyl-L-methionine = N(2)-methylguanosine(1516) in 16S rRNA + S-adenosyl-L-homocysteine + H(+). Specifically methylates the guanosine in position 1516 of 16S rRNA. This Escherichia coli (strain SMS-3-5 / SECEC) protein is Ribosomal RNA small subunit methyltransferase J.